Reading from the N-terminus, the 421-residue chain is 2',3'-cyclic-nucleotide 3'-phosphodiesterase (421 aa).

Phosphoserine occurs at positions 6 and 9. Residue Y110 is modified to Phosphotyrosine. At S170 the chain carries Phosphoserine. H251 serves as the catalytic Proton acceptor. T253 contacts substrate. The active-site Proton donor is the H330. T332 serves as a coordination point for substrate. S359 is modified (phosphoserine). C418 carries the cysteine methyl ester modification. A lipid anchor (S-farnesyl cysteine) is attached at C418. The propeptide at T419–I421 is removed in mature form.

The protein belongs to the 2H phosphoesterase superfamily. CNPase family. Exists as monomers and homodimers.

It localises to the membrane. Its subcellular location is the melanosome. The catalysed reaction is a nucleoside 2',3'-cyclic phosphate + H2O = a nucleoside 2'-phosphate + H(+). In terms of biological role, catalyzes the formation of 2'-nucleotide products from 2',3'-cyclic substrates. May participate in RNA metabolism in the myelinating cell, CNP is the third most abundant protein in central nervous system myelin. The protein is 2',3'-cyclic-nucleotide 3'-phosphodiesterase of Homo sapiens (Human).